We begin with the raw amino-acid sequence, 488 residues long: NADH-ubiquinone oxidoreductase chain 4 (488 aa).

Transmembrane regions (helical) follow at residues 1 to 21, 34 to 54, 79 to 99, 110 to 130, 134 to 154, 164 to 184, 207 to 227, 238 to 258, 272 to 292, 301 to 321, 328 to 348, 367 to 387, 407 to 427, and 452 to 472; these read MFLL…IEGN, SIAL…FILF, VDGL…IAIL, VLSF…VFLV, LLFY…IGLF, FYLF…IVAM, LFLF…SFLN, PLSG…YGIF, YTYI…FSTL, IAYS…SNTI, IALG…AGGI, VMPI…GTPL, LLGV…IFMY, and FIML…PAPI.

It belongs to the complex I subunit 4 family.

Its subcellular location is the mitochondrion membrane. The catalysed reaction is a ubiquinone + NADH + 5 H(+)(in) = a ubiquinol + NAD(+) + 4 H(+)(out). Core subunit of the mitochondrial membrane respiratory chain NADH dehydrogenase (Complex I) that is believed to belong to the minimal assembly required for catalysis. Complex I functions in the transfer of electrons from NADH to the respiratory chain. The immediate electron acceptor for the enzyme is believed to be ubiquinone. This chain is NADH-ubiquinone oxidoreductase chain 4 (ND4), found in Aspergillus amstelodami.